The chain runs to 141 residues: Cystatin-S (141 aa).

Residues 1–20 (MARPLCTLLLLMATLAGALA) form the signal peptide. Residues Ser-21 and Ser-23 each carry the phosphoserine modification. The short motif at 76–80 (QTFGG) is the Secondary area of contact element. Cystine bridges form between Cys-94/Cys-104 and Cys-118/Cys-138.

It belongs to the cystatin family. Post-translationally, phosphorylated at both its N- and C-terminal regions. Expressed in submandibular and sublingual saliva but not in parotid saliva (at protein level). Expressed in saliva, tears, urine and seminal fluid.

It is found in the secreted. Functionally, this protein strongly inhibits papain and ficin, partially inhibits stem bromelain and bovine cathepsin C, but does not inhibit porcine cathepsin B or clostripain. Papain is inhibited non-competitively. This Homo sapiens (Human) protein is Cystatin-S (CST4).